The chain runs to 392 residues: Trans-2-enoyl-CoA reductase [NADH] (392 aa).

Residues 74–75 (FE), 111–112 (DA), and 141–142 (LA) each bind NAD(+). Residue Y227 coordinates substrate. The active-site Proton donor is Y237. NAD(+)-binding positions include K246 and 276 to 278 (VVT).

This sequence belongs to the TER reductase family. As to quaternary structure, monomer.

It carries out the reaction a 2,3-saturated acyl-CoA + NAD(+) = a (2E)-enoyl-CoA + NADH + H(+). Its pathway is lipid metabolism; fatty acid biosynthesis. Functionally, involved in the fatty acid synthesis (FAS II). Catalyzes the reduction of a carbon-carbon double bond in an enoyl moiety that is covalently linked to a coenzyme A (CoA). The chain is Trans-2-enoyl-CoA reductase [NADH] from Brachyspira hyodysenteriae (strain ATCC 49526 / WA1).